Consider the following 35-residue polypeptide: Fatty acid synthase (35 aa).

Ser12 is a catalytic residue.

In terms of assembly, homodimer which is arranged in a head to tail fashion. Interacts with CEACAM1; this interaction is insulin and phosphorylation-dependent; reduces fatty-acid synthase activity.

It is found in the cytoplasm. The protein resides in the melanosome. It catalyses the reaction acetyl-CoA + n malonyl-CoA + 2n NADPH + 2n H(+) = a long-chain fatty acid + (n+1) CoA + n CO2 + 2n NADP(+).. Its function is as follows. Fatty acid synthetase catalyzes the formation of long-chain fatty acids from acetyl-CoA, malonyl-CoA and NADPH. This multifunctional protein has 7 catalytic activities as an acyl carrier protein. Functionally, this fragment is from the acyltransferase domain of the fatty acid synthetase. The sequence is that of Fatty acid synthase (FASN) from Capra hircus (Goat).